The following is a 485-amino-acid chain: Glutamyl-tRNA(Gln) amidotransferase subunit A (485 aa).

Catalysis depends on charge relay system residues K79 and S154. S178 (acyl-ester intermediate) is an active-site residue.

Belongs to the amidase family. GatA subfamily. In terms of assembly, heterotrimer of A, B and C subunits.

The catalysed reaction is L-glutamyl-tRNA(Gln) + L-glutamine + ATP + H2O = L-glutaminyl-tRNA(Gln) + L-glutamate + ADP + phosphate + H(+). Allows the formation of correctly charged Gln-tRNA(Gln) through the transamidation of misacylated Glu-tRNA(Gln) in organisms which lack glutaminyl-tRNA synthetase. The reaction takes place in the presence of glutamine and ATP through an activated gamma-phospho-Glu-tRNA(Gln). This Clostridium novyi (strain NT) protein is Glutamyl-tRNA(Gln) amidotransferase subunit A.